Here is a 307-residue protein sequence, read N- to C-terminus: Agmatinase (307 aa).

Histidine 128, aspartate 151, histidine 153, aspartate 155, aspartate 232, and aspartate 234 together coordinate Mn(2+).

It belongs to the arginase family. Agmatinase subfamily. Mn(2+) is required as a cofactor.

It catalyses the reaction agmatine + H2O = urea + putrescine. It participates in amine and polyamine biosynthesis; putrescine biosynthesis via agmatine pathway; putrescine from agmatine: step 1/1. Its function is as follows. Catalyzes the formation of putrescine from agmatine. In Neisseria gonorrhoeae (strain ATCC 700825 / FA 1090), this protein is Agmatinase.